A 348-amino-acid chain; its full sequence is MVRTINETFLKACRGERTDYVPAWYMRQAGRSQPEYRKIKEKYSLFEITHNPELCAYVTKLPVDQYNVDAAILYKDIMSPLPAIGVDVEIKSGIGPVIDNPIRSLQDVEKLGEINPEDDVPYILDTIRLLTTEMLDVPLIGFSGAPFTLASYMIEGGPSRNYHNTKAFMYAEPKAWFALMDKLADMVITYLKAQINAGAKAVQIFDSWVGTVNVADYRVFIKPAMERIFAEVRTMGVPMIMHGVGAAHLVNEWHDLPLDVVGLDWRLPIEEARARGVHKAVQGNMDPSFLLAPWSVIEEHVKGILDQGMKQPGYIFNLGHGVFPEVNPDTLKRLTTFIHEYSKGQLAK.

Residues 27–31 (RQAGR), Phe46, Asp76, Tyr152, Ser207, and His320 contribute to the substrate site.

This sequence belongs to the uroporphyrinogen decarboxylase family. As to quaternary structure, homodimer.

It is found in the cytoplasm. It catalyses the reaction uroporphyrinogen III + 4 H(+) = coproporphyrinogen III + 4 CO2. The protein operates within porphyrin-containing compound metabolism; protoporphyrin-IX biosynthesis; coproporphyrinogen-III from 5-aminolevulinate: step 4/4. Catalyzes the decarboxylation of four acetate groups of uroporphyrinogen-III to yield coproporphyrinogen-III. The chain is Uroporphyrinogen decarboxylase from Bacillus thuringiensis (strain Al Hakam).